We begin with the raw amino-acid sequence, 93 residues long: Leydig cell tumor 10 kDa protein (93 aa).

The interval 1 to 41 (MAQGQRKFQAQKPKSKAAAAERSRGPRKGGRVIGPKKARVV) is disordered. Low complexity predominate over residues 7-18 (KFQAQKPKSKAA). A compositionally biased stretch (basic residues) spans 25-39 (GPRKGGRVIGPKKAR).

The protein belongs to the UPF0390 family. Leydig cell tumor, testis and placenta.

In terms of biological role, may have a potential role in hypercalcemia of malignancy. This chain is Leydig cell tumor 10 kDa protein, found in Rattus norvegicus (Rat).